A 479-amino-acid polypeptide reads, in one-letter code: Ribosomal RNA small subunit methyltransferase F (479 aa).

S-adenosyl-L-methionine-binding positions include 125–131 (AAAPGSK), Glu-149, Asp-176, and Asp-194. Cys-247 (nucleophile) is an active-site residue.

It belongs to the class I-like SAM-binding methyltransferase superfamily. RsmB/NOP family.

Its subcellular location is the cytoplasm. The enzyme catalyses cytidine(1407) in 16S rRNA + S-adenosyl-L-methionine = 5-methylcytidine(1407) in 16S rRNA + S-adenosyl-L-homocysteine + H(+). Its function is as follows. Specifically methylates the cytosine at position 1407 (m5C1407) of 16S rRNA. This chain is Ribosomal RNA small subunit methyltransferase F, found in Shigella sonnei (strain Ss046).